A 326-amino-acid chain; its full sequence is Putative replication protein B (326 aa).

It belongs to the ParB family.

The chain is Putative replication protein B from Sinorhizobium fredii (strain NBRC 101917 / NGR234).